A 417-amino-acid polypeptide reads, in one-letter code: Dihydroorotase (417 aa).

2 residues coordinate Zn(2+): H60 and H62. Substrate is bound by residues 62 to 64 and N94; that span reads HLR. 4 residues coordinate Zn(2+): K138, H167, H207, and D275. K138 carries the N6-carboxylysine modification. D275 is an active-site residue. Substrate-binding positions include H279 and 289 to 290; that span reads AG.

Belongs to the metallo-dependent hydrolases superfamily. DHOase family. Class I DHOase subfamily. It depends on Zn(2+) as a cofactor.

The catalysed reaction is (S)-dihydroorotate + H2O = N-carbamoyl-L-aspartate + H(+). The protein operates within pyrimidine metabolism; UMP biosynthesis via de novo pathway; (S)-dihydroorotate from bicarbonate: step 3/3. In terms of biological role, catalyzes the reversible cyclization of carbamoyl aspartate to dihydroorotate. This Pyrococcus horikoshii (strain ATCC 700860 / DSM 12428 / JCM 9974 / NBRC 100139 / OT-3) protein is Dihydroorotase.